The sequence spans 293 residues: Hydroxyquinol 1,2-dioxygenase (293 aa).

Fe cation-binding residues include Y164, Y197, H221, and H223.

The protein belongs to the intradiol ring-cleavage dioxygenase family. Homodimer. Requires Fe(3+) as cofactor.

It carries out the reaction benzene-1,2,4-triol + O2 = maleylacetate + 2 H(+). Its pathway is aromatic compound metabolism; beta-ketoadipate pathway; 3-oxoadipate from 3,4-dihydroxybenzoate: step 2/4. Inhibited by 3,5-dichlorocatechol, chlorohydroquinone and 4,5-dibromocatechol. Functionally, catalyzes the ortho-cleavage of the aromatic ring of hydroxyquinol. This Nocardioides simplex (Arthrobacter simplex) protein is Hydroxyquinol 1,2-dioxygenase (chqB).